Here is a 393-residue protein sequence, read N- to C-terminus: Putative odorant receptor 69a, isoform B (393 aa).

At 1-39 the chain is on the cytoplasmic side; it reads MQLEDFMRYPDLVCQAAQLPRYTWNGRRSLEVKRNLAKR. The chain crosses the membrane as a helical span at residues 40–60; it reads IIFWLGAVNLVYHNIGCVMYG. Residues 61–69 are Extracellular-facing; sequence YFGDGRTKD. Residues 70–90 traverse the membrane as a helical segment; the sequence is PIAYLAELASVASMLGFTIVG. The Cytoplasmic portion of the chain corresponds to 91–138; it reads TLNLWKMLSLKTHFENLLNEFEELFQLIKHRAYRIHHYQEKYTRHIRN. Residues 139 to 159 form a helical membrane-spanning segment; the sequence is TFIFHTSAVVYYNSLPILLMI. The Extracellular segment spans residues 160–208; that stretch reads REHFSNSQQLGYRIQSNTWYPWQVQGSIPGFFAAVACQIFSCQTNMCVN. A helical membrane pass occupies residues 209-229; it reads MFIQFLINFFGIQLEIHFDGL. Residues 230-269 lie on the Cytoplasmic side of the membrane; the sequence is ARQLETIDARNPHAKDQLKYLIVYHTKLLNLADRVNRSFN. Residues 270-290 form a helical membrane-spanning segment; that stretch reads FTFLISLSVSMISNCFLAFSM. Over 291-305 the chain is Extracellular; the sequence is TMFDFGTSLKHLLGL. A helical transmembrane segment spans residues 306–326; sequence LLFITYNFSMCRSGTHLILTS. Over 327–365 the chain is Cytoplasmic; the sequence is GKVLPAAFYNNWYEGDLVYRRMLLILMMRATKPYMWKTY. Residues 366-386 traverse the membrane as a helical segment; the sequence is KLAPVSITTYMATLKFSYQMF. The Extracellular segment spans residues 387 to 393; that stretch reads TCVRSLK.

Belongs to the insect chemoreceptor superfamily. Heteromeric odorant receptor channel (TC 1.A.69) family. Or49a subfamily. In terms of assembly, interacts with Orco. Complexes exist early in the endomembrane system in olfactory sensory neurons (OSNs), coupling these complexes to the conserved ciliary trafficking pathway. In terms of tissue distribution, expressed in olfactory sensory neurons in the antenna.

It is found in the cell membrane. Functionally, odorant receptor which mediates acceptance or avoidance behavior, depending on its substrates. The odorant receptor repertoire encodes a large collection of odor stimuli that vary widely in identity, intensity, and duration. May form a complex with Orco to form odorant-sensing units, providing sensitive and prolonged odorant signaling and calcium permeability. The polypeptide is Putative odorant receptor 69a, isoform B (Or69a) (Drosophila melanogaster (Fruit fly)).